A 247-amino-acid chain; its full sequence is Cyclin-Q (247 aa).

This sequence belongs to the cyclin family. Cyclin-like FAM58 subfamily.

May be an activating cyclin for the cyclin-associated kinase CDK10. This Danio rerio (Zebrafish) protein is Cyclin-Q (ccnq).